Reading from the N-terminus, the 717-residue chain is MPSMAQGELKSFVQNSRPNPKSPTVSPFSMRQKIAEHRRSLPIASVEKRLVEEVQKNDILIIVGETGSGKTTQLPQFLYNAGFCREGKMIGITQPRRIAAVTVAKRVAEECEVQLGQKVGYSIRFDDTTSGSTRLKYMTDGLLLREALLDPHLSRYSVIIVDEAHDRSVHTDVLLALLKKIQRTRSQPVSEKTEFGNVASQVQTTTRDANGPQQNGVLKGYQGRKLSPLKLIIMSASLDARVFSEYFGGAKAVHVQGRQFPVDILYTVHPESDYVDATLVTIFQIHFEEKPGDILVFLTGQDEIESVERLVQERLQNIPEDKRKLLPLAIFSALPSEQQMKVFAPAPTGFRKVILATNIAETSITIPGIRYVIDPGFVKARSYDPSKGMESLDVVPASKAQTLQRSGRAGREGPGKSFRLYPEREFEKLEDSTKPEIKRCNLSNIILQLKALGIDDIVGFDFIDKPSRGAIIKALAELHSLGALADDGKLENPVGYQMSRLPLEPVYSKALILANQFNCLEEMLITVAVLSVESIFYDPREKREEARTSKNHFASVEGDHLTYLSVYRESDEFLEKRKAAGSGNNIDKIMKKWCKENYVNSRSLKHARDIYRQIREHVEQIGFNVSSCGNDMLAFRRCLAASFFLKAAQRQLDGTYRALESGEVVHIHPTSVLFRAKPECVIFNELMQTSKKYIKNLTIIDSLWLSELAPHHFQTAE.

The interval 1–29 is disordered; the sequence is MPSMAQGELKSFVQNSRPNPKSPTVSPFS. Polar residues predominate over residues 12-29; sequence FVQNSRPNPKSPTVSPFS. Residues 51 to 256 enclose the Helicase ATP-binding domain; it reads VEEVQKNDIL…FGGAKAVHVQ (206 aa). 64 to 71 is an ATP binding site; that stretch reads GETGSGKT. Positions 162–165 match the DEAH box motif; that stretch reads DEAH. In terms of domain architecture, Helicase C-terminal spans 278-453; sequence TLVTIFQIHF…NIILQLKALG (176 aa).

Belongs to the DEAD box helicase family. DEAH subfamily. PRP22 sub-subfamily. In terms of tissue distribution, widely expressed but spatially and temporally regulated during development.

It is found in the nucleus. Its subcellular location is the nucleolus. It catalyses the reaction ATP + H2O = ADP + phosphate + H(+). In terms of biological role, involved in pre-mRNA splicing. Plays a role during development in processes such as meristem maintenance, leaf morphogenesis and root morphogenesis. This Arabidopsis thaliana (Mouse-ear cress) protein is Pre-mRNA-splicing factor ATP-dependent RNA helicase DEAH10.